Here is a 718-residue protein sequence, read N- to C-terminus: Quinolinate synthase, chloroplastic (718 aa).

Over residues 1-22 (MALALSVAPTSSSLSSLLSRTP) the composition is skewed to low complexity. The tract at residues 1–29 (MALALSVAPTSSSLSSLLSRTPNPSPNFR) is disordered. The transit peptide at 1 to 70 (MALALSVAPT…VNASPFSISA (70 aa)) directs the protein to the chloroplast. C132 serves as the catalytic Cysteine persulfide intermediate. Iminosuccinate contacts are provided by H280 and S306. Position 360 (C360) interacts with [4Fe-4S] cluster. Residues 389–391 (YIN) and S411 contribute to the iminosuccinate site. A [4Fe-4S] cluster-binding site is contributed by C484. Iminosuccinate contacts are provided by residues 510-512 (HLE) and T535. Residue C640 coordinates [4Fe-4S] cluster.

This sequence belongs to the quinolinate synthase family. Type 1 subfamily. Homodimer. Interacts in vitro with NFS2, CpNIFS3 and AO. Part of a Cys defulfurase complex. Requires [4Fe-4S] cluster as cofactor. As to expression, expressed in roots, leaves, stems and flowers.

The protein resides in the plastid. Its subcellular location is the chloroplast. The catalysed reaction is iminosuccinate + dihydroxyacetone phosphate = quinolinate + phosphate + 2 H2O + H(+). It functions in the pathway cofactor biosynthesis; NAD(+) biosynthesis; quinolinate from iminoaspartate: step 1/1. Catalyzes the condensation of iminoaspartate with dihydroxyacetone phosphate to form quinolinate. Can complement nadA-deficient E.coli mutant. Essential for the de novo synthesis of NAD. Also participates in cysteine desulfurization mediated by NFS2. Can activate the cysteine desulfurase activity of NFS2 in vitro. This chain is Quinolinate synthase, chloroplastic, found in Arabidopsis thaliana (Mouse-ear cress).